The chain runs to 292 residues: Tetratricopeptide repeat protein 1 (292 aa).

Positions 23–125 (TQEAECAGPP…STRLKEEGNE (103 aa)) are disordered. Basic and acidic residues-rich tracts occupy residues 45 to 55 (LLRDDEAHLQE) and 75 to 85 (GADKVENKSNE). Phosphoserine is present on residues Ser83 and Ser90. The segment covering 99–125 (ELEKNMSDEEKQKRREESTRLKEEGNE) has biased composition (basic and acidic residues). 3 TPR repeats span residues 116-149 (STRL…CPSC), 155-188 (SILF…NPSY), and 189-222 (IRAI…DPSI).

In terms of assembly, interacts with the GAP domain of NF1. Interacts (via TPR repeats) with HSP90AA1 and HSPA8.

The chain is Tetratricopeptide repeat protein 1 (TTC1) from Homo sapiens (Human).